The primary structure comprises 64 residues: Cytochrome c oxidase subunit 5C-2 (64 aa).

Residues 15–34 traverse the membrane as a helical segment; it reads SVVKELIIGLTLGLAAGGLW.

Belongs to the cytochrome c oxidase subunit 5C family.

The protein localises to the mitochondrion inner membrane. This protein is one of the nuclear-coded polypeptide chains of cytochrome c oxidase, the terminal oxidase in mitochondrial electron transport. The polypeptide is Cytochrome c oxidase subunit 5C-2 (Arabidopsis thaliana (Mouse-ear cress)).